Consider the following 251-residue polypeptide: Ubiquinone/menaquinone biosynthesis C-methyltransferase UbiE (251 aa).

S-adenosyl-L-methionine-binding positions include T74, D95, and 123-124; that span reads NA.

The protein belongs to the class I-like SAM-binding methyltransferase superfamily. MenG/UbiE family.

The catalysed reaction is a 2-demethylmenaquinol + S-adenosyl-L-methionine = a menaquinol + S-adenosyl-L-homocysteine + H(+). The enzyme catalyses a 2-methoxy-6-(all-trans-polyprenyl)benzene-1,4-diol + S-adenosyl-L-methionine = a 5-methoxy-2-methyl-3-(all-trans-polyprenyl)benzene-1,4-diol + S-adenosyl-L-homocysteine + H(+). It functions in the pathway quinol/quinone metabolism; menaquinone biosynthesis; menaquinol from 1,4-dihydroxy-2-naphthoate: step 2/2. It participates in cofactor biosynthesis; ubiquinone biosynthesis. Functionally, methyltransferase required for the conversion of demethylmenaquinol (DMKH2) to menaquinol (MKH2) and the conversion of 2-polyprenyl-6-methoxy-1,4-benzoquinol (DDMQH2) to 2-polyprenyl-3-methyl-6-methoxy-1,4-benzoquinol (DMQH2). The polypeptide is Ubiquinone/menaquinone biosynthesis C-methyltransferase UbiE (Shewanella putrefaciens (strain CN-32 / ATCC BAA-453)).